A 638-amino-acid chain; its full sequence is tRNA uridine 5-carboxymethylaminomethyl modification enzyme MnmG (638 aa).

Residues 13-18 (GGGHAG), valine 125, and serine 180 contribute to the FAD site. Position 273–287 (273–287 (GPRYCPSIEDKIHRF)) interacts with NAD(+). Glutamine 370 contributes to the FAD binding site.

This sequence belongs to the MnmG family. Homodimer. Heterotetramer of two MnmE and two MnmG subunits. Requires FAD as cofactor.

The protein resides in the cytoplasm. Functionally, NAD-binding protein involved in the addition of a carboxymethylaminomethyl (cmnm) group at the wobble position (U34) of certain tRNAs, forming tRNA-cmnm(5)s(2)U34. In Cellvibrio japonicus (strain Ueda107) (Pseudomonas fluorescens subsp. cellulosa), this protein is tRNA uridine 5-carboxymethylaminomethyl modification enzyme MnmG.